Consider the following 152-residue polypeptide: Small ribosomal subunit protein uS15 (152 aa).

It belongs to the universal ribosomal protein uS15 family. As to quaternary structure, part of the 30S ribosomal subunit.

This is Small ribosomal subunit protein uS15 from Methanospirillum hungatei JF-1 (strain ATCC 27890 / DSM 864 / NBRC 100397 / JF-1).